The chain runs to 222 residues: UPF0128 protein TK2294 (222 aa).

It belongs to the UPF0128 family.

The sequence is that of UPF0128 protein TK2294 from Thermococcus kodakarensis (strain ATCC BAA-918 / JCM 12380 / KOD1) (Pyrococcus kodakaraensis (strain KOD1)).